The following is a 541-amino-acid chain: Sorting nexin-27 (541 aa).

The disordered stretch occupies residues 1-42; sequence MADEDGEGIHPSAPHRNGGGGGGGGSGLHCAGNGGGGGGGPR. Positions 17–41 are enriched in gly residues; sequence NGGGGGGGGSGLHCAGNGGGGGGGP. Residues 43-136 enclose the PDZ domain; it reads VVRIVKSESG…ELILTVLSVP (94 aa). Phosphoserine occurs at positions 51 and 62. The PX domain maps to 161 to 269; that stretch reads QAVPISVPRY…EFLSESDENY (109 aa). Positions 273 to 362 constitute a Ras-associating domain; sequence SDVELRVALP…TCLTIRKWLF (90 aa). Residues 273 to 362 form an FERM-like region F1 region; the sequence is SDVELRVALP…TCLTIRKWLF (90 aa). The FERM-like region F2 stretch occupies residues 373–421; that stretch reads NDLAVTYFFHQAVDDVKKGYIKAEEKSYQLQKLYEQRKMVMYLNMLRTC. An FERM-like region F3 region spans residues 425-525; that stretch reads NEIIFPHCAC…RVFCELKWRK (101 aa).

This sequence belongs to the sorting nexin family. Core component of the SNX27-retromer, a multiprotein complex composed of SNX27, the WASH complex and the retromer complex. Interacts (via PDZ domain) with a number of target transmembrane proteins (via PDZ-binding motif): ABCC4, ADRB2, ARHGEF7, GRIA1, GRIA2, GRIN1, GRIN2A GRIN2C, KCNJ6, KCNJ9 and SLC2A1/GLUT1. Interacts (via the FERM-like regions) with the WASH complex. Interacts with SNX1. Interacts with CYTIP. Isoform 1 and isoform 2 directly interact with DGKZ. Isoform 1 and isoform 2 interact with HT4R isoform 5-HTA(A). Interacts with MCC. Interacts (via PDZ domains) with SLC9A3; directs SLC9A3 membrane insertion from early endosomes to the plasma membrane. In terms of tissue distribution, widely expressed. Expressed in cells of hematopoietic origin (at protein level).

The protein localises to the early endosome membrane. The protein resides in the cytoplasm. Its subcellular location is the cytosol. Functionally, involved in the retrograde transport from endosome to plasma membrane, a trafficking pathway that promotes the recycling of internalized transmembrane proteins. Following internalization, endocytosed transmembrane proteins are delivered to early endosomes and recycled to the plasma membrane instead of being degraded in lysosomes. SNX27 specifically binds and directs sorting of a subset of transmembrane proteins containing a PDZ-binding motif at the C-terminus: following interaction with target transmembrane proteins, associates with the retromer complex, preventing entry into the lysosomal pathway, and promotes retromer-tubule based plasma membrane recycling. SNX27 also binds with the WASH complex. Interacts with membranes containing phosphatidylinositol-3-phosphate (PtdIns(3P)). May participate in establishment of natural killer cell polarity. Recruits CYTIP to early endosomes. This is Sorting nexin-27 (SNX27) from Homo sapiens (Human).